A 472-amino-acid chain; its full sequence is Inhibitor of Apoptosis OPG037 (472 aa).

ANK repeat units lie at residues 97 to 126, 130 to 161, 233 to 263, 267 to 297, 322 to 351, and 353 to 377; these read DGNY…DPNA, HNKT…KINN, DGNT…DVNK, FGDS…VITD, YDST…ICED, and MYYA…SVDF.

It belongs to the orthopoxvirus OPG037 protein family. As to quaternary structure, may interact with host caspase-9-Apaf-1 complex.

The protein resides in the host cytoplasm. Inhibits host apoptosis. Acts by associating with host apoptosome. This chain is Inhibitor of Apoptosis OPG037 (OPG037), found in Vaccinia virus (strain Western Reserve) (VACV).